The primary structure comprises 414 residues: MFDRQNTLAKTDPQLWEAIQNENKRQEDHIELIASENYTSPAVMAAQGSQLTNKYAEGYPGKRYYGGCEFIDVAEQLAIDRVKALFGAEAANVQPHCGASANQAVFLAFLKPGDTFMGMSLAEGGHLTHGMALNMSGKWFNPIAYGLDKNEEIDYEQMERLAREHKPKLIIAGASAYSKKIDFERIGKLAKEVGAIFMVDMAHYAGLVAAGVYPNPVPHADIVTSTTHKSLRGPRGGIILMKAEHEKAINFAVFPGLQGGPLMHVIAAKAVAFKEAAEPGFKDYQKQVVANAKALAETLIARGLRIVSGGTDSHVMLVDLRAKSMTGKEAERVLGEAHITCNKNGIPNDPEKPMVTSGIRLGSPAMTTRGFKEAEARQVGNFIADVLDNPNDPANIAKVRAQVAELTKRFPVYD.

(6S)-5,6,7,8-tetrahydrofolate-binding positions include Leu121 and 125 to 127; that span reads GHL. Position 229 is an N6-(pyridoxal phosphate)lysine (Lys229).

It belongs to the SHMT family. In terms of assembly, homodimer. Pyridoxal 5'-phosphate is required as a cofactor.

Its subcellular location is the cytoplasm. The catalysed reaction is (6R)-5,10-methylene-5,6,7,8-tetrahydrofolate + glycine + H2O = (6S)-5,6,7,8-tetrahydrofolate + L-serine. It participates in one-carbon metabolism; tetrahydrofolate interconversion. It functions in the pathway amino-acid biosynthesis; glycine biosynthesis; glycine from L-serine: step 1/1. Catalyzes the reversible interconversion of serine and glycine with tetrahydrofolate (THF) serving as the one-carbon carrier. This reaction serves as the major source of one-carbon groups required for the biosynthesis of purines, thymidylate, methionine, and other important biomolecules. Also exhibits THF-independent aldolase activity toward beta-hydroxyamino acids, producing glycine and aldehydes, via a retro-aldol mechanism. In Polynucleobacter necessarius subsp. necessarius (strain STIR1), this protein is Serine hydroxymethyltransferase.